The following is a 366-amino-acid chain: NAD(P)H-quinone oxidoreductase subunit 1, chloroplastic (366 aa).

7 helical membrane passes run 28–48 (IWLL…VLVI), 105–125 (IAVI…HLVL), 128–148 (LSIG…GLLM), 250–270 (SGIK…VSSL), 271–291 (FVTV…FIFI), 303–323 (IFGM…FLFI), and 346–366 (FLLP…LLSL).

The protein belongs to the complex I subunit 1 family. NDH is composed of at least 16 different subunits, 5 of which are encoded in the nucleus.

It is found in the plastid. It localises to the chloroplast thylakoid membrane. The catalysed reaction is a plastoquinone + NADH + (n+1) H(+)(in) = a plastoquinol + NAD(+) + n H(+)(out). It catalyses the reaction a plastoquinone + NADPH + (n+1) H(+)(in) = a plastoquinol + NADP(+) + n H(+)(out). NDH shuttles electrons from NAD(P)H:plastoquinone, via FMN and iron-sulfur (Fe-S) centers, to quinones in the photosynthetic chain and possibly in a chloroplast respiratory chain. The immediate electron acceptor for the enzyme in this species is believed to be plastoquinone. Couples the redox reaction to proton translocation, and thus conserves the redox energy in a proton gradient. This is NAD(P)H-quinone oxidoreductase subunit 1, chloroplastic from Nandina domestica (Heavenly bamboo).